A 185-amino-acid chain; its full sequence is ATP-dependent protease subunit HslV (185 aa).

Thr2 is a catalytic residue. 3 residues coordinate Na(+): Gly157, Cys160, and Thr163.

It belongs to the peptidase T1B family. HslV subfamily. As to quaternary structure, a double ring-shaped homohexamer of HslV is capped on each side by a ring-shaped HslU homohexamer. The assembly of the HslU/HslV complex is dependent on binding of ATP.

The protein localises to the cytoplasm. The catalysed reaction is ATP-dependent cleavage of peptide bonds with broad specificity.. Allosterically activated by HslU binding. Functionally, protease subunit of a proteasome-like degradation complex believed to be a general protein degrading machinery. This is ATP-dependent protease subunit HslV from Vibrio cholerae serotype O1 (strain ATCC 39315 / El Tor Inaba N16961).